The primary structure comprises 258 residues: TLC domain-containing protein 4 A (258 aa).

The next 7 membrane-spanning stretches (helical) occupy residues 8–28 (YLISVEPLGFILYYTSLYIWI), 49–71 (IEWTNKIVATISSIVSFSLSCYC), 92–112 (FILKFISFYFLFDALHLIIYY), 118–138 (WPIIIHHLVVGILSYVYIGLY), 144–164 (LTLLYFLLFEITNPFIHMKWF), 170–190 (LENHILYSINGFMMAFFFIFI), and 217–237 (IIFFCFPIITILNLFWTYLVI). In terms of domain architecture, TLC spans 46–245 (SSKIEWTNKI…VIKGILKHLS (200 aa)).

It belongs to the TLCD4 family.

It is found in the membrane. The chain is TLC domain-containing protein 4 A (tlcd4a) from Dictyostelium discoideum (Social amoeba).